The sequence spans 53 residues: Cytochrome c oxidase subunit 7e (53 aa).

In terms of assembly, slime mold cytochrome c oxidase consists of at least seven different polypeptides species, subunits I, II, III, IV, V, VI, and VIIe/s in order of MW.

The protein resides in the mitochondrion inner membrane. The catalysed reaction is 4 Fe(II)-[cytochrome c] + O2 + 8 H(+)(in) = 4 Fe(III)-[cytochrome c] + 2 H2O + 4 H(+)(out). This protein is one of the nuclear-coded polypeptide chains of cytochrome c oxidase, the terminal oxidase in mitochondrial electron transport. The sequence is that of Cytochrome c oxidase subunit 7e (cxgE) from Dictyostelium discoideum (Social amoeba).